The following is a 417-amino-acid chain: Serine hydroxymethyltransferase 3 (417 aa).

(6S)-5,6,7,8-tetrahydrofolate contacts are provided by residues Leu121 and 125-127; that span reads GHL. Lys230 bears the N6-(pyridoxal phosphate)lysine mark. 355–357 provides a ligand contact to (6S)-5,6,7,8-tetrahydrofolate; sequence SPF.

Belongs to the SHMT family. In terms of assembly, homodimer. Pyridoxal 5'-phosphate serves as cofactor.

It localises to the cytoplasm. The enzyme catalyses (6R)-5,10-methylene-5,6,7,8-tetrahydrofolate + glycine + H2O = (6S)-5,6,7,8-tetrahydrofolate + L-serine. Its pathway is one-carbon metabolism; tetrahydrofolate interconversion. The protein operates within amino-acid biosynthesis; glycine biosynthesis; glycine from L-serine: step 1/1. Catalyzes the reversible interconversion of serine and glycine with tetrahydrofolate (THF) serving as the one-carbon carrier. This reaction serves as the major source of one-carbon groups required for the biosynthesis of purines, thymidylate, methionine, and other important biomolecules. Also exhibits THF-independent aldolase activity toward beta-hydroxyamino acids, producing glycine and aldehydes, via a retro-aldol mechanism. This Pseudomonas fluorescens (strain Pf0-1) protein is Serine hydroxymethyltransferase 3.